A 982-amino-acid chain; its full sequence is Protein phosphatase 1 regulatory subunit 12B (982 aa).

Positions 1 to 24 are enriched in basic and acidic residues; sequence MAELEHLGGKRAESARMRRAEQLR. Residues 1-50 are disordered; sequence MAELEHLGGKRAESARMRRAEQLRRWRGSLTEQEPAERRGAGRQPLTRRG. Position 29 is a phosphoserine (serine 29). ANK repeat units follow at residues 57–86, 90–119, 123–152, 216–245, and 249–278; these read EDGA…DINT, DGLT…NVNQ, EGWT…SVGI, SGAT…ELNV, and DGWT…DMDI. Disordered regions lie at residues 342-517, 556-579, 606-864, and 918-948; these read EETP…RESA, RTPH…SSTP, TDSS…EARE, and AQQK…KMSE. The segment covering 362–374 has biased composition (acidic residues); sequence SEEEEGEDEASES. The segment covering 375-385 has biased composition (basic and acidic residues); the sequence is ETEKEADKKPE. The span at 389–401 shows a compositional bias: polar residues; it reads NHSNSESKSSITE. Positions 411 to 421 are enriched in low complexity; it reads FSASSARRFSS. Threonine 445 bears the Phosphothreonine mark. The span at 466 to 478 shows a compositional bias: low complexity; it reads SSIYRSSSSPRIS. Over residues 482–491 the composition is skewed to basic and acidic residues; the sequence is DNKDKERENK. Over residues 623–632 the composition is skewed to basic and acidic residues; the sequence is VRDEEAESLR. The span at 633 to 643 shows a compositional bias: basic residues; it reads KARSRQARQTR. Threonine 646 bears the Phosphothreonine mark. A compositionally biased stretch (basic and acidic residues) spans 656–680; it reads EAERTFSRSRAERQAQEQPREKPTD. The segment covering 731–742 has biased composition (low complexity); sequence TTPASPSTSRPS. The segment covering 743–755 has biased composition (polar residues); that stretch reads LYTSSHLLWTNRF. Residues 797–807 show a composition bias toward basic residues; it reads ERRRPKERRRG. Threonine 808 carries the phosphothreonine modification. Residues 824-836 are compositionally biased toward basic and acidic residues; it reads EEVKETWHERLSR. Serine 839 carries the post-translational modification Phosphoserine. Over residues 840-849 the composition is skewed to polar residues; it reads GGSNPTTSDS. 3 stretches are compositionally biased toward basic and acidic residues: residues 850–864, 918–927, and 933–948; these read YGDR…EARE, AQQKQEKTSD, and EMEK…KMSE. Serine 947 carries the phosphoserine modification.

PP1 comprises a catalytic subunit, PPP1CA, PPP1CB or PPP1CC, and one or several targeting or regulatory subunits. PPP1R12B mediates binding to myosin. Isoform 3 and isoform 4 bind PPP1R12A, but not isoform 1 of PPP1R12B itself. Binds IL16. Detected in skeletal muscle, fetal and adult heart, brain, placenta, kidney, spleen, thymus, pancreas and lung. Isoform 3 and isoform 4 are heart specific.

The protein resides in the cytoplasm. It localises to the cytoskeleton. The protein localises to the stress fiber. Regulates myosin phosphatase activity. Augments Ca(2+) sensitivity of the contractile apparatus. The polypeptide is Protein phosphatase 1 regulatory subunit 12B (PPP1R12B) (Homo sapiens (Human)).